Here is a 784-residue protein sequence, read N- to C-terminus: Homoaconitase, mitochondrial (784 aa).

Residues 1–32 constitute a mitochondrion transit peptide; the sequence is MIHPVRRALAVAASRAPRQFLAAASRTTSVRS. [4Fe-4S] cluster is bound by residues C399, C468, and C471. The segment at 572–596 is disordered; it reads EAGLTPESTSSSSSSSSSSEEESLT. Low complexity predominate over residues 578 to 589; sequence ESTSSSSSSSSS.

Belongs to the aconitase/IPM isomerase family. The cofactor is [4Fe-4S] cluster.

The protein localises to the mitochondrion. It carries out the reaction (2R,3S)-homoisocitrate = cis-homoaconitate + H2O. Its pathway is amino-acid biosynthesis; L-lysine biosynthesis via AAA pathway; L-alpha-aminoadipate from 2-oxoglutarate: step 3/5. Its function is as follows. Catalyzes the reversible hydration of cis-homoaconitate to (2R,3S)-homoisocitrate, a step in the alpha-aminoadipate pathway for lysine biosynthesis. In Neurospora crassa (strain ATCC 24698 / 74-OR23-1A / CBS 708.71 / DSM 1257 / FGSC 987), this protein is Homoaconitase, mitochondrial (lys-4).